The primary structure comprises 73 residues: Large ribosomal subunit protein bL31 (73 aa).

Belongs to the bacterial ribosomal protein bL31 family. Type A subfamily. As to quaternary structure, part of the 50S ribosomal subunit.

Binds the 23S rRNA. The chain is Large ribosomal subunit protein bL31 from Agrobacterium fabrum (strain C58 / ATCC 33970) (Agrobacterium tumefaciens (strain C58)).